A 125-amino-acid polypeptide reads, in one-letter code: Fluoride-specific ion channel FluC (125 aa).

4 helical membrane passes run 4–24 (LMLV…TVTA), 32–52 (AFPW…GLLV), 67–87 (LLLA…SLDV), and 100–120 (LAYV…GLWL). Gly-75 and Thr-78 together coordinate Na(+).

Belongs to the fluoride channel Fluc/FEX (TC 1.A.43) family.

It is found in the cell inner membrane. The catalysed reaction is fluoride(in) = fluoride(out). Na(+) is not transported, but it plays an essential structural role and its presence is essential for fluoride channel function. Functionally, fluoride-specific ion channel. Important for reducing fluoride concentration in the cell, thus reducing its toxicity. This Chelativorans sp. (strain BNC1) protein is Fluoride-specific ion channel FluC.